The chain runs to 98 residues: Aspartyl/glutamyl-tRNA(Asn/Gln) amidotransferase subunit C (98 aa).

The interval 76-98 is disordered; that stretch reads QVLSGAPDAEDGRFKVPAILEED.

It belongs to the GatC family. As to quaternary structure, heterotrimer of A, B and C subunits.

It catalyses the reaction L-glutamyl-tRNA(Gln) + L-glutamine + ATP + H2O = L-glutaminyl-tRNA(Gln) + L-glutamate + ADP + phosphate + H(+). The catalysed reaction is L-aspartyl-tRNA(Asn) + L-glutamine + ATP + H2O = L-asparaginyl-tRNA(Asn) + L-glutamate + ADP + phosphate + 2 H(+). In terms of biological role, allows the formation of correctly charged Asn-tRNA(Asn) or Gln-tRNA(Gln) through the transamidation of misacylated Asp-tRNA(Asn) or Glu-tRNA(Gln) in organisms which lack either or both of asparaginyl-tRNA or glutaminyl-tRNA synthetases. The reaction takes place in the presence of glutamine and ATP through an activated phospho-Asp-tRNA(Asn) or phospho-Glu-tRNA(Gln). The sequence is that of Aspartyl/glutamyl-tRNA(Asn/Gln) amidotransferase subunit C from Renibacterium salmoninarum (strain ATCC 33209 / DSM 20767 / JCM 11484 / NBRC 15589 / NCIMB 2235).